Here is a 637-residue protein sequence, read N- to C-terminus: Chaperone protein HtpG (637 aa).

Residues 1 to 345 (MTAAQKETLG…SNDLPLNVSR (345 aa)) are a; substrate-binding. Residues 346-562 (EILQDNKVTQ…DNDMSSQMQK (217 aa)) are b. Positions 563 to 637 (LMESVGQAAP…LNKLMLELSK (75 aa)) are c.

This sequence belongs to the heat shock protein 90 family. Homodimer.

Its subcellular location is the cytoplasm. In terms of biological role, molecular chaperone. Has ATPase activity. The polypeptide is Chaperone protein HtpG (Pseudoalteromonas translucida (strain TAC 125)).